Consider the following 302-residue polypeptide: 4-hydroxy-tetrahydrodipicolinate synthase (302 aa).

Residue Thr-55 participates in pyruvate binding. Catalysis depends on Tyr-144, which acts as the Proton donor/acceptor. Lys-172 acts as the Schiff-base intermediate with substrate in catalysis. Val-214 provides a ligand contact to pyruvate.

It belongs to the DapA family. As to quaternary structure, homotetramer; dimer of dimers.

It localises to the cytoplasm. It carries out the reaction L-aspartate 4-semialdehyde + pyruvate = (2S,4S)-4-hydroxy-2,3,4,5-tetrahydrodipicolinate + H2O + H(+). Its pathway is amino-acid biosynthesis; L-lysine biosynthesis via DAP pathway; (S)-tetrahydrodipicolinate from L-aspartate: step 3/4. Its function is as follows. Catalyzes the condensation of (S)-aspartate-beta-semialdehyde [(S)-ASA] and pyruvate to 4-hydroxy-tetrahydrodipicolinate (HTPA). This Prochlorococcus marinus (strain MIT 9313) protein is 4-hydroxy-tetrahydrodipicolinate synthase.